We begin with the raw amino-acid sequence, 474 residues long: tRNA-2-methylthio-N(6)-dimethylallyladenosine synthase (474 aa).

Positions 3–120 (KKLHIKTWGC…LPEMINSVRG (118 aa)) constitute an MTTase N-terminal domain. Residues C12, C49, C83, C157, C161, and C164 each coordinate [4Fe-4S] cluster. A Radical SAM core domain is found at 143 to 375 (RADGPTAFVS…QDRINQQTTA (233 aa)). Positions 378–441 (RRKLGTVQRI…ANSLRGMLLR (64 aa)) constitute a TRAM domain.

It belongs to the methylthiotransferase family. MiaB subfamily. In terms of assembly, monomer. [4Fe-4S] cluster serves as cofactor.

It is found in the cytoplasm. It carries out the reaction N(6)-dimethylallyladenosine(37) in tRNA + (sulfur carrier)-SH + AH2 + 2 S-adenosyl-L-methionine = 2-methylsulfanyl-N(6)-dimethylallyladenosine(37) in tRNA + (sulfur carrier)-H + 5'-deoxyadenosine + L-methionine + A + S-adenosyl-L-homocysteine + 2 H(+). Its function is as follows. Catalyzes the methylthiolation of N6-(dimethylallyl)adenosine (i(6)A), leading to the formation of 2-methylthio-N6-(dimethylallyl)adenosine (ms(2)i(6)A) at position 37 in tRNAs that read codons beginning with uridine. The sequence is that of tRNA-2-methylthio-N(6)-dimethylallyladenosine synthase from Erwinia tasmaniensis (strain DSM 17950 / CFBP 7177 / CIP 109463 / NCPPB 4357 / Et1/99).